The primary structure comprises 154 residues: Myoglobin (154 aa).

In terms of domain architecture, Globin spans 2 to 148 (GLSDGEWHLV…FRNDIAAKIK (147 aa)). Ser-4 is subject to Phosphoserine. Nitrite is bound at residue His-65. His-65 provides a ligand contact to O2. Thr-68 is subject to Phosphothreonine. Position 94 (His-94) interacts with heme b.

It belongs to the globin family. In terms of assembly, monomeric.

It localises to the cytoplasm. The protein localises to the sarcoplasm. It carries out the reaction Fe(III)-heme b-[protein] + nitric oxide + H2O = Fe(II)-heme b-[protein] + nitrite + 2 H(+). The catalysed reaction is H2O2 + AH2 = A + 2 H2O. In terms of biological role, monomeric heme protein which primary function is to store oxygen and facilitate its diffusion within muscle tissues. Reversibly binds oxygen through a pentacoordinated heme iron and enables its timely and efficient release as needed during periods of heightened demand. Depending on the oxidative conditions of tissues and cells, and in addition to its ability to bind oxygen, it also has a nitrite reductase activity whereby it regulates the production of bioactive nitric oxide. Under stress conditions, like hypoxia and anoxia, it also protects cells against reactive oxygen species thanks to its pseudoperoxidase activity. The chain is Myoglobin (MB) from Pusa sibirica (Baikal seal).